We begin with the raw amino-acid sequence, 354 residues long: Probable cinnamyl alcohol dehydrogenase 1 (354 aa).

Residue cysteine 47 participates in Zn(2+) binding. Serine 49 contacts NADP(+). Zn(2+) is bound by residues histidine 69, glutamate 70, cysteine 100, cysteine 103, cysteine 106, cysteine 114, and cysteine 163. NADP(+) contacts are provided by residues threonine 167, 188–193, 211–216, threonine 251, glycine 275, and 296–298; these read GLGGVG, SSSDKK, and SFI.

The protein belongs to the zinc-containing alcohol dehydrogenase family. As to quaternary structure, homodimer. The cofactor is Zn(2+).

It carries out the reaction (E)-cinnamyl alcohol + NADP(+) = (E)-cinnamaldehyde + NADPH + H(+). The catalysed reaction is (E)-coniferol + NADP(+) = (E)-coniferaldehyde + NADPH + H(+). The enzyme catalyses (E)-sinapyl alcohol + NADP(+) = (E)-sinapaldehyde + NADPH + H(+). It catalyses the reaction (E)-4-coumaroyl alcohol + NADP(+) = (E)-4-coumaraldehyde + NADPH + H(+). It carries out the reaction (E)-caffeyl alcohol + NADP(+) = (E)-caffeyl aldehyde + NADPH + H(+). It functions in the pathway aromatic compound metabolism; phenylpropanoid biosynthesis. Involved in lignin biosynthesis. Catalyzes the final step specific for the production of lignin monomers. Catalyzes the NADPH-dependent reduction of coniferaldehyde, 5-hydroxyconiferaldehyde, sinapaldehyde, 4-coumaraldehyde and caffeyl aldehyde to their respective alcohols. This is Probable cinnamyl alcohol dehydrogenase 1 (CAD1) from Eucalyptus gunnii (Cider gum).